Consider the following 1020-residue polypeptide: Sodium/potassium-transporting ATPase subunit alpha-2 (1020 aa).

Positions 1 to 5 (MGRGA) are excised as a propeptide. Residues 1–31 (MGRGAGREYSPAATTAENGGGKKKQKEKELD) are disordered. Residues 6-85 (GREYSPAATT…NALTPPPTTP (80 aa)) lie on the Cytoplasmic side of the membrane. S10 is subject to Phosphoserine. The tract at residues 80 to 82 (PPP) is interaction with phosphoinositide-3 kinase. Residues 86-106 (EWVKFCRQLFGGFSILLWIGA) traverse the membrane as a helical segment. Residues 107–129 (LLCFLAYGILAAMEDEPSNDNLY) are Extracellular-facing. The chain crosses the membrane as a helical span at residues 130–150 (LGIVLAAVVIVTGCFSYYQEA). At 151 to 286 (KSSKIMDSFK…VGQTPIAMEI (136 aa)) the chain is on the cytoplasmic side. Polar residues predominate over residues 212–227 (DNSSLTGESEPQTRSP). The tract at residues 212–231 (DNSSLTGESEPQTRSPEFTH) is disordered. The chain crosses the membrane as a helical span at residues 287–306 (EHFIQLITGVAVFLGVSFFV). The Extracellular segment spans residues 307–318 (LSLILGYSWLEA). A helical membrane pass occupies residues 319–336 (VIFLIGIIVANVPEGLLA). At 337 to 769 (TVTVCLTLTA…EEGRLIFDNL (433 aa)) the chain is on the cytoplasmic side. The active-site 4-aspartylphosphate intermediate is the D374. 4 positions are modified to phosphoserine: S439, S450, S496, and S559. T570 carries the phosphothreonine modification. Phosphoserine is present on residues S587 and S672. Positions 714 and 718 each coordinate Mg(2+). A helical membrane pass occupies residues 770–789 (KKSIAYTLTSNIPEITPFLL). The Extracellular segment spans residues 790–799 (FIIANIPLPL). A helical transmembrane segment spans residues 800-820 (GTVTILCIDLGTDMVPAISLA). Residues 821-840 (YEAAESDIMKRQPRNSQTDK) are Cytoplasmic-facing. Phosphoserine is present on S826. Residues 841-863 (LVNERLISMAYGQIGMIQALGGF) traverse the membrane as a helical segment. Over 864–915 (FTYFVILAENGFLPSRLLGIRLDWDDRTTNDLEDSYGQEWTYEQRKVVEFTC) the chain is Extracellular. The chain crosses the membrane as a helical span at residues 916 to 935 (HTAFFASIVVVQWADLIICK). Topologically, residues 936 to 948 (TRRNSVFQQGMKN) are cytoplasmic. Residue S940 is modified to Phosphoserine; by PKA. A helical transmembrane segment spans residues 949–967 (KILIFGLLEETALAAFLSY). The Extracellular portion of the chain corresponds to 968-982 (CPGMGVALRMYPLKV). Residues 983–1003 (TWWFCAFPYSLLIFIYDEVRK) form a helical membrane-spanning segment. Over 1004 to 1020 (LILRRYPGGWVEKETYY) the chain is Cytoplasmic.

Belongs to the cation transport ATPase (P-type) (TC 3.A.3) family. Type IIC subfamily. The sodium/potassium-transporting ATPase is composed of a catalytic alpha subunit, an auxiliary non-catalytic beta subunit and an additional regulatory subunit. Interacts with regulatory subunit FXYD1.

Its subcellular location is the membrane. The protein localises to the cell membrane. It catalyses the reaction K(+)(out) + Na(+)(in) + ATP + H2O = K(+)(in) + Na(+)(out) + ADP + phosphate + H(+). This is the catalytic component of the active enzyme, which catalyzes the hydrolysis of ATP coupled with the exchange of sodium and potassium ions across the plasma membrane. This action creates the electrochemical gradient of sodium and potassium ions, providing the energy for active transport of various nutrients. The sequence is that of Sodium/potassium-transporting ATPase subunit alpha-2 (Atp1a2) from Mus musculus (Mouse).